We begin with the raw amino-acid sequence, 530 residues long: GMP synthase [glutamine-hydrolyzing] (530 aa).

A Glutamine amidotransferase type-1 domain is found at 4–205; the sequence is RILILDYGSQ…VKDICGCEGD (202 aa). The active-site Nucleophile is the cysteine 84. Catalysis depends on residues histidine 179 and glutamate 181. The 193-residue stretch at 206-398 folds into the GMPS ATP-PPase domain; it reads WNMPDYISEA…LGLPPQMVYR (193 aa). Residue 233-239 participates in ATP binding; sequence SGGVDSS.

In terms of assembly, homodimer.

It catalyses the reaction XMP + L-glutamine + ATP + H2O = GMP + L-glutamate + AMP + diphosphate + 2 H(+). It participates in purine metabolism; GMP biosynthesis; GMP from XMP (L-Gln route): step 1/1. Functionally, catalyzes the synthesis of GMP from XMP. The sequence is that of GMP synthase [glutamine-hydrolyzing] from Bordetella bronchiseptica (strain ATCC BAA-588 / NCTC 13252 / RB50) (Alcaligenes bronchisepticus).